We begin with the raw amino-acid sequence, 67 residues long: Toxin Bl-1 (67 aa).

The LCN-type CS-alpha/beta domain occupies 2-66 (RDGYISQPEN…GIIVDGIKCH (65 aa)). 4 disulfides stabilise this stretch: Cys-12–Cys-65, Cys-16–Cys-37, Cys-23–Cys-47, and Cys-27–Cys-49. Position 67 is a threonine amide (Thr-67).

It belongs to the long (4 C-C) scorpion toxin superfamily. Sodium channel inhibitor family. Alpha subfamily. In terms of tissue distribution, expressed by the venom gland.

The protein localises to the secreted. Alpha toxins bind voltage-independently at site-3 of sodium channels (Nav) and inhibit the inactivation of the activated channels, thereby blocking neuronal transmission. Is highly toxic to insects (tested on the crickets A.domesticus). This peptide may also be toxic to mammals, since it is similar to alpha-like toxins that are active on both insect and mammalian sodium channels. The protein is Toxin Bl-1 of Buthacus leptochelys (Egyptian fat-tailed scorpion).